A 421-amino-acid chain; its full sequence is MLELKFMRENVEMLKEMLKNRNSNVDMDAFVELDSKRREVLSEVENLKRERNNASAEIANLKKEKKNADHIIEKMGEVSTKIKDLDAELVEIDEKIKDIQLNIPNVYHPSTPIGPDEDYNLEIRKWGIPKKFDFEPKSHWDIGEDLGILDFERGAKLSGSRFVLYRGAAARLERAIINFMLDVHTLEEGYTEHITPFMVKAEVCEGTGQLPKFEEDMYKTTDDMYLISTSEITMTNIHRKEILEQAELPKYYTAYSPCFRREAGSYGKDVKGLIRLHQFNKVEMVKITDAESSYDELEKMVNNAETILQRLELPYRVIQLCSGDLGFSAAKTYDLEVWLPSQNKYREISSCSNCEAFQARRMGLKYRVPNGSEFCHTLNGSGLAVGRTLVAIMENYQQEDGSFLVPKVLIPYMGGVDVIKK.

229–231 contributes to the L-serine binding site; the sequence is TSE. 260-262 lines the ATP pocket; that stretch reads RRE. Residue Glu-283 coordinates L-serine. 347-350 provides a ligand contact to ATP; that stretch reads EISS. An L-serine-binding site is contributed by Ser-381.

It belongs to the class-II aminoacyl-tRNA synthetase family. Type-1 seryl-tRNA synthetase subfamily. In terms of assembly, homodimer. The tRNA molecule binds across the dimer.

Its subcellular location is the cytoplasm. It catalyses the reaction tRNA(Ser) + L-serine + ATP = L-seryl-tRNA(Ser) + AMP + diphosphate + H(+). The enzyme catalyses tRNA(Sec) + L-serine + ATP = L-seryl-tRNA(Sec) + AMP + diphosphate + H(+). It participates in aminoacyl-tRNA biosynthesis; selenocysteinyl-tRNA(Sec) biosynthesis; L-seryl-tRNA(Sec) from L-serine and tRNA(Sec): step 1/1. Its function is as follows. Catalyzes the attachment of serine to tRNA(Ser). Is also able to aminoacylate tRNA(Sec) with serine, to form the misacylated tRNA L-seryl-tRNA(Sec), which will be further converted into selenocysteinyl-tRNA(Sec). The sequence is that of Serine--tRNA ligase from Fusobacterium nucleatum subsp. nucleatum (strain ATCC 25586 / DSM 15643 / BCRC 10681 / CIP 101130 / JCM 8532 / KCTC 2640 / LMG 13131 / VPI 4355).